A 416-amino-acid chain; its full sequence is MYYLKNTNFWMFGFFFFFYFFIMGAYFPFFPIWLHEVNHISKGDTGIIFACISLFSLLFQPIFGLLSDKLGLRKHLLWVITGMLVMFAPFFIYVFGPLLQVNILLGSIVGGIYLGFIYNAGAPAIEAYIEKASRRSNFEFGRARMFGCVGWALCASIAGIMFTINNQFVFWLGSGCAVILALLLLFSKTDVPSSAKVADAVGANNSAFSLKLALELFKQPKLWLISLYVVGVSCTYDVFDQQFANFFTSFFATGEQGTRVFGYVTTMGELLNASIMFFAPLIVNRIGGKNALLLAGTIMSVRIIGSHSHTALEVVILKTLHMFEIPFLIVGCFKYITSQFEVRFSATIYLVCFCFFKQLAMIFMSVLAGKMYESIGFQGAYLVLGIIRVSFTLISVFTLSGPGPFSLLRRRESVAL.

At 1 to 13 (MYYLKNTNFWMFG) the chain is on the cytoplasmic side. A helical transmembrane segment spans residues 14 to 34 (FFFFFYFFIMGAYFPFFPIWL). Residues 35 to 45 (HEVNHISKGDT) are Periplasmic-facing. The helical transmembrane segment at 46–66 (GIIFACISLFSLLFQPIFGLL) threads the bilayer. The Cytoplasmic segment spans residues 67 to 75 (SDKLGLRKH). A helical transmembrane segment spans residues 76–96 (LLWVITGMLVMFAPFFIYVFG). A topological domain (periplasmic) is located at residue proline 97. A helical transmembrane segment spans residues 98 to 118 (LLQVNILLGSIVGGIYLGFIY). Residues 119–144 (NAGAPAIEAYIEKASRRSNFEFGRAR) lie on the Cytoplasmic side of the membrane. Residues 145–165 (MFGCVGWALCASIAGIMFTIN) form a helical membrane-spanning segment. Position 166 (asparagine 166) is a topological domain, periplasmic. The chain crosses the membrane as a helical span at residues 167–187 (QFVFWLGSGCAVILALLLLFS). The Cytoplasmic segment spans residues 188 to 211 (KTDVPSSAKVADAVGANNSAFSLK). The chain crosses the membrane as a helical span at residues 212–232 (LALELFKQPKLWLISLYVVGV). Residues 233–262 (SCTYDVFDQQFANFFTSFFATGEQGTRVFG) lie on the Periplasmic side of the membrane. The chain crosses the membrane as a helical span at residues 263-283 (YVTTMGELLNASIMFFAPLIV). The Cytoplasmic portion of the chain corresponds to 284-290 (NRIGGKN). A helical transmembrane segment spans residues 291–309 (ALLLAGTIMSVRIIGSHSH). The Periplasmic segment spans residues 310–314 (TALEV). Residues 315–336 (VILKTLHMFEIPFLIVGCFKYI) form a helical membrane-spanning segment. Residues 337–347 (TSQFEVRFSAT) are Cytoplasmic-facing. The helical transmembrane segment at 348–368 (IYLVCFCFFKQLAMIFMSVLA) threads the bilayer. The Periplasmic segment spans residues 369-378 (GKMYESIGFQ). Residues 379–399 (GAYLVLGIIRVSFTLISVFTL) form a helical membrane-spanning segment. Topologically, residues 400-416 (SGPGPFSLLRRRESVAL) are cytoplasmic.

This sequence belongs to the major facilitator superfamily. Oligosaccharide:H(+) symporter (OHS) (TC 2.A.1.5) family.

It localises to the cell inner membrane. The enzyme catalyses lactose(in) + H(+)(in) = lactose(out) + H(+)(out). Its function is as follows. Responsible for transport of beta-galactosides into the cell, with the concomitant import of a proton (symport system). The polypeptide is Lactose permease (lacY) (Citrobacter freundii).